The sequence spans 420 residues: Glucose-1-phosphate adenylyltransferase (420 aa).

Residues tyrosine 107, glycine 172, 187–188 (EK), and serine 205 contribute to the alpha-D-glucose 1-phosphate site.

The protein belongs to the bacterial/plant glucose-1-phosphate adenylyltransferase family. In terms of assembly, homotetramer.

It catalyses the reaction alpha-D-glucose 1-phosphate + ATP + H(+) = ADP-alpha-D-glucose + diphosphate. It participates in glycan biosynthesis; glycogen biosynthesis. Its function is as follows. Involved in the biosynthesis of ADP-glucose, a building block required for the elongation reactions to produce glycogen. Catalyzes the reaction between ATP and alpha-D-glucose 1-phosphate (G1P) to produce pyrophosphate and ADP-Glc. In Rhizobium etli (strain CIAT 652), this protein is Glucose-1-phosphate adenylyltransferase.